A 211-amino-acid chain; its full sequence is Cytochrome c biogenesis ATP-binding export protein CcmA (211 aa).

Positions 6–211 (LQTVALACER…RDIDLGNWAV (206 aa)) constitute an ABC transporter domain. 38–45 (GPNGSGKT) lines the ATP pocket.

Belongs to the ABC transporter superfamily. CcmA exporter (TC 3.A.1.107) family. As to quaternary structure, the complex is composed of two ATP-binding proteins (CcmA) and two transmembrane proteins (CcmB).

The protein localises to the cell inner membrane. The enzyme catalyses heme b(in) + ATP + H2O = heme b(out) + ADP + phosphate + H(+). Functionally, part of the ABC transporter complex CcmAB involved in the biogenesis of c-type cytochromes; once thought to export heme, this seems not to be the case, but its exact role is uncertain. Responsible for energy coupling to the transport system. This Pseudomonas fluorescens (strain Pf0-1) protein is Cytochrome c biogenesis ATP-binding export protein CcmA.